The primary structure comprises 131 residues: Phosphomevalonate dehydratase small subunit (131 aa).

Serine 62 functions as the Proton acceptor in the catalytic mechanism.

Belongs to the AcnX type II small subunit family. In terms of assembly, heterodimer composed of a large subunit (PMDh-L) and a small subunit (PMDh-S).

It carries out the reaction (R)-5-phosphomevalonate = (2E)-3-methyl-5-phosphooxypent-2-enoate + H2O. It functions in the pathway isoprenoid biosynthesis; isopentenyl diphosphate biosynthesis via mevalonate pathway. Component of a hydro-lyase that catalyzes the dehydration of mevalonate 5-phosphate (MVA5P) to form trans-anhydromevalonate 5-phosphate (tAHMP). Involved in the archaeal mevalonate (MVA) pathway, which provides fundamental precursors for isoprenoid biosynthesis, such as isopentenyl diphosphate (IPP) and dimethylallyl diphosphate (DMAPP). This Thermococcus gammatolerans (strain DSM 15229 / JCM 11827 / EJ3) protein is Phosphomevalonate dehydratase small subunit.